Here is a 266-residue protein sequence, read N- to C-terminus: Ribonuclease HII (266 aa).

The tract at residues 19-38 is disordered; that stretch reads HPGMIRDKEKPAPTKPGKGV. The RNase H type-2 domain maps to 58-246; sequence WPVAGCDEAG…VVAARQKHQP (189 aa). A divalent metal cation is bound by residues aspartate 64, glutamate 65, and aspartate 155.

The protein belongs to the RNase HII family. It depends on Mn(2+) as a cofactor. Mg(2+) serves as cofactor.

It is found in the cytoplasm. It carries out the reaction Endonucleolytic cleavage to 5'-phosphomonoester.. Functionally, endonuclease that specifically degrades the RNA of RNA-DNA hybrids. This is Ribonuclease HII from Rhodopseudomonas palustris (strain BisB18).